The sequence spans 459 residues: Argininosuccinate lyase (459 aa).

The protein belongs to the lyase 1 family. Argininosuccinate lyase subfamily.

Its subcellular location is the cytoplasm. The enzyme catalyses 2-(N(omega)-L-arginino)succinate = fumarate + L-arginine. Its pathway is amino-acid biosynthesis; L-arginine biosynthesis; L-arginine from L-ornithine and carbamoyl phosphate: step 3/3. This chain is Argininosuccinate lyase, found in Buchnera aphidicola subsp. Schizaphis graminum (strain Sg).